A 409-amino-acid polypeptide reads, in one-letter code: Autotransproter heptosyltransferase BAHTCr (409 aa).

ADP-D-glycero-beta-D-manno-heptose-binding residues include T107, L108, and G109. The Proton acceptor role is filled by D110. Positions 224, 226, 230, 257, 302, and 326 each coordinate ADP-D-glycero-beta-D-manno-heptose. Residues C339, C342, C358, and C370 each coordinate Fe(3+).

It belongs to the glycosyltransferase 9 family. Homododecamer composed of 6 homodimers forming a ring. Fe(3+) serves as cofactor.

The protein resides in the cytoplasm. The catalysed reaction is ADP-D-glycero-beta-D-manno-heptose + L-seryl-[protein] = O-(D-glycero-alpha-D-manno-heptosyl)-L-seryl-[protein] + ADP + H(+). It carries out the reaction ADP-L-glycero-beta-D-manno-heptose + L-seryl-[protein] = O-(L-glycero-alpha-D-manno-heptosyl)-L-seryl-[protein] + ADP + H(+). Glycosylates autotransporter CARC. By glycosylating CARC, involved in the colonization of the mouse host gastrointestinal tract. This Citrobacter rodentium (strain ICC168) (Citrobacter freundii biotype 4280) protein is Autotransproter heptosyltransferase BAHTCr.